A 328-amino-acid chain; its full sequence is Biotin synthase (328 aa).

Residues 48 to 277 (FVGNEVHLCS…GKRITVCGGR (230 aa)) enclose the Radical SAM core domain. [4Fe-4S] cluster is bound by residues Cys66, Cys70, and Cys73. [2Fe-2S] cluster contacts are provided by Ser142 and Cys202.

The protein belongs to the radical SAM superfamily. Biotin synthase family. Homodimer. [4Fe-4S] cluster is required as a cofactor. [2Fe-2S] cluster serves as cofactor.

The catalysed reaction is (4R,5S)-dethiobiotin + (sulfur carrier)-SH + 2 reduced [2Fe-2S]-[ferredoxin] + 2 S-adenosyl-L-methionine = (sulfur carrier)-H + biotin + 2 5'-deoxyadenosine + 2 L-methionine + 2 oxidized [2Fe-2S]-[ferredoxin]. It participates in cofactor biosynthesis; biotin biosynthesis; biotin from 7,8-diaminononanoate: step 2/2. Its function is as follows. Catalyzes the conversion of dethiobiotin (DTB) to biotin by the insertion of a sulfur atom into dethiobiotin via a radical-based mechanism. The sequence is that of Biotin synthase from Citrifermentans bemidjiense (strain ATCC BAA-1014 / DSM 16622 / JCM 12645 / Bem) (Geobacter bemidjiensis).